The primary structure comprises 633 residues: Kelch repeat and BTB domain-containing protein 11 (633 aa).

A disordered region spans residues 1–118; it reads MENSVAPFVL…EDPPSRHEHA (118 aa). Over residues 35 to 60 the composition is skewed to polar residues; the sequence is STAQTPCSLSASLCFSSGDDSPPQSR. Over residues 61-73 the composition is skewed to low complexity; the sequence is ASAAEGSEASPPS. 6 positions are modified to phosphoserine: Ser70, Ser73, Ser92, Ser95, Ser107, and Ser113. A BTB domain is found at 146–206; sequence PDLVIEVAGR…AYSGRMAGVR (61 aa). 4 Kelch repeats span residues 317–365, 366–418, 419–463, and 465–506; these read RPQS…VLFN, YLFL…ALDG, HLYA…TCNG, and IYVS…ALDG.

The sequence is that of Kelch repeat and BTB domain-containing protein 11 (Kbtbd11) from Mus musculus (Mouse).